Here is a 261-residue protein sequence, read N- to C-terminus: Cytochrome c oxidase subunit 3 (261 aa).

Residues 1–15 (MTHQTHAYHMVNPSP) lie on the Mitochondrial matrix side of the membrane. Residues 16 to 34 (WPLTGALSALLMTSGLIMW) form a helical membrane-spanning segment. Topologically, residues 35–40 (FHFNST) are mitochondrial intermembrane. Residues 41–66 (TLLTLGLTTNMLTMYQWWRDVIREST) form a helical membrane-spanning segment. Over 67 to 72 (FQGHHT) the chain is Mitochondrial matrix. The helical transmembrane segment at 73–105 (PTVQKGLRYGMILFIISEVLFFTGFFWAFYHSS) threads the bilayer. Residues 106-128 (LAPTPELGGCWPPTGIHPLNPLE) are Mitochondrial intermembrane-facing. A helical transmembrane segment spans residues 129–152 (VPLLNTSVLLASGVSITWAHHSLM). The Mitochondrial matrix portion of the chain corresponds to 153–155 (EGN). The chain crosses the membrane as a helical span at residues 156–183 (RNPMLQALFITIALGIYFTLLQASEYYE). Topologically, residues 184–190 (APFTISD) are mitochondrial intermembrane. A helical transmembrane segment spans residues 191–223 (GVYGSTFFVATGFHGLHVIIGSTFLIVCFFRQL). Over 224 to 232 (KFHFTSNHH) the chain is Mitochondrial matrix. The chain crosses the membrane as a helical span at residues 233–256 (FGFEAAAWYWHFVDVVWLFLYVSI). At 257 to 261 (YWWGS) the chain is on the mitochondrial intermembrane side.

It belongs to the cytochrome c oxidase subunit 3 family. In terms of assembly, component of the cytochrome c oxidase (complex IV, CIV), a multisubunit enzyme composed of 14 subunits. The complex is composed of a catalytic core of 3 subunits MT-CO1, MT-CO2 and MT-CO3, encoded in the mitochondrial DNA, and 11 supernumerary subunits COX4I, COX5A, COX5B, COX6A, COX6B, COX6C, COX7A, COX7B, COX7C, COX8 and NDUFA4, which are encoded in the nuclear genome. The complex exists as a monomer or a dimer and forms supercomplexes (SCs) in the inner mitochondrial membrane with NADH-ubiquinone oxidoreductase (complex I, CI) and ubiquinol-cytochrome c oxidoreductase (cytochrome b-c1 complex, complex III, CIII), resulting in different assemblies (supercomplex SCI(1)III(2)IV(1) and megacomplex MCI(2)III(2)IV(2)).

It localises to the mitochondrion inner membrane. The catalysed reaction is 4 Fe(II)-[cytochrome c] + O2 + 8 H(+)(in) = 4 Fe(III)-[cytochrome c] + 2 H2O + 4 H(+)(out). Its function is as follows. Component of the cytochrome c oxidase, the last enzyme in the mitochondrial electron transport chain which drives oxidative phosphorylation. The respiratory chain contains 3 multisubunit complexes succinate dehydrogenase (complex II, CII), ubiquinol-cytochrome c oxidoreductase (cytochrome b-c1 complex, complex III, CIII) and cytochrome c oxidase (complex IV, CIV), that cooperate to transfer electrons derived from NADH and succinate to molecular oxygen, creating an electrochemical gradient over the inner membrane that drives transmembrane transport and the ATP synthase. Cytochrome c oxidase is the component of the respiratory chain that catalyzes the reduction of oxygen to water. Electrons originating from reduced cytochrome c in the intermembrane space (IMS) are transferred via the dinuclear copper A center (CU(A)) of subunit 2 and heme A of subunit 1 to the active site in subunit 1, a binuclear center (BNC) formed by heme A3 and copper B (CU(B)). The BNC reduces molecular oxygen to 2 water molecules using 4 electrons from cytochrome c in the IMS and 4 protons from the mitochondrial matrix. This chain is Cytochrome c oxidase subunit 3 (MT-CO3), found in Madoqua guentheri (Guenther's dik-dik).